We begin with the raw amino-acid sequence, 751 residues long: Photosystem I P700 chlorophyll a apoprotein A1 (751 aa).

Helical transmembrane passes span 73–96 (IFSA…FHGA), 159–182 (LYCT…FHYH), 198–222 (MNHH…HLSL), 294–312 (TAHH…GHMY), 349–372 (WHAQ…HHMY), 388–414 (LSLF…IFMV), 435–457 (AIVS…LYIH), and 532–550 (FLVH…LILV). [4Fe-4S] cluster is bound by residues C574 and C583. Transmembrane regions (helical) follow at residues 590–611 (HVFL…HFSW) and 665–687 (LSAY…MFLF). H676 contacts chlorophyll a'. Residues M684 and Y692 each contribute to the chlorophyll a site. W693 is a binding site for phylloquinone. Residues 725-745 (AVGVAHYLLGGIGTTWAFFLA) traverse the membrane as a helical segment.

The protein belongs to the PsaA/PsaB family. In terms of assembly, the PsaA/B heterodimer binds the P700 chlorophyll special pair and subsequent electron acceptors. PSI consists of a core antenna complex that captures photons, and an electron transfer chain that converts photonic excitation into a charge separation. The eukaryotic PSI reaction center is composed of at least 11 subunits. It depends on P700 is a chlorophyll a/chlorophyll a' dimer, A0 is one or more chlorophyll a, A1 is one or both phylloquinones and FX is a shared 4Fe-4S iron-sulfur center. as a cofactor.

Its subcellular location is the plastid. It is found in the chloroplast thylakoid membrane. The enzyme catalyses reduced [plastocyanin] + hnu + oxidized [2Fe-2S]-[ferredoxin] = oxidized [plastocyanin] + reduced [2Fe-2S]-[ferredoxin]. In terms of biological role, psaA and PsaB bind P700, the primary electron donor of photosystem I (PSI), as well as the electron acceptors A0, A1 and FX. PSI is a plastocyanin/cytochrome c6-ferredoxin oxidoreductase, converting photonic excitation into a charge separation, which transfers an electron from the donor P700 chlorophyll pair to the spectroscopically characterized acceptors A0, A1, FX, FA and FB in turn. Oxidized P700 is reduced on the lumenal side of the thylakoid membrane by plastocyanin or cytochrome c6. This Pyropia yezoensis (Susabi-nori) protein is Photosystem I P700 chlorophyll a apoprotein A1.